The primary structure comprises 286 residues: MEDKRQRARVQGGWATPTKSQSATQPASPARSRLSQTAGPAWRSKEQQQCDRQFVFKEPQLVVRAAPEPRVIDREGVYEISLSPTGVSRVCLYPGFVDLKEADWILEQLCKDVPWKQRMGIREDVTYPQPRLTAWYGELPYTYSRITMEPNPHWLPVLWTLKSRIEENTSHTFNSLLCNFYRDEKDSVDWHSDDEPSLGSCPVIASLSFGATRTFEMRKKPPPEENGDYTYVERVKIPLDHGTLLIMEGATQADWQHRVPKEYHSRQPRVNLTFRTVYPDPRGAPR.

A disordered region spans residues 1 to 46 (MEDKRQRARVQGGWATPTKSQSATQPASPARSRLSQTAGPAWRSKE). Residues 17-38 (PTKSQSATQPASPARSRLSQTA) show a composition bias toward polar residues. Residues W115 and 141 to 143 (YTY) each bind substrate. A Fe2OG dioxygenase domain is found at 172 to 278 (TFNSLLCNFY…RVNLTFRTVY (107 aa)). Position 177 is a (4R)-5-hydroxyleucine; alternate (L177). (4R)-5-oxoleucine; alternate is present on L177. 179–181 (NFY) lines the 2-oxoglutarate pocket. Positions 191 and 193 each coordinate Fe cation. D194 lines the substrate pocket. H257 provides a ligand contact to Fe cation. 2-oxoglutarate-binding positions include 269 to 275 (RVNLTFR) and R275.

It belongs to the alkB family. In terms of assembly, interacts with the ASCC complex composed of ASCC1, ASCC2 and ASCC3. Interacts directly with ASCC3, and is thereby recruited to the ASCC complex. Interacts with OTUD4; the interaction is direct. Interacts with USP7 and USP9X. Fe(2+) serves as cofactor. In terms of processing, ubiquitinated; undergoes 'Lys-48'-linked polyubiquitination. OTUD4 promotes USP7 and USP9X-dependent deubiquitination of 'Lys-48'-polyubiquitinated ALKBH3 promoting the repair of alkylated DNA lesions. As to expression, detected in testis, kidney, liver and heart.

The protein localises to the nucleus. Its subcellular location is the cytoplasm. It catalyses the reaction an N(1)-methyladenosine in mRNA + 2-oxoglutarate + O2 = an adenosine in mRNA + formaldehyde + succinate + CO2. The catalysed reaction is a methylated nucleobase within DNA + 2-oxoglutarate + O2 = a nucleobase within DNA + formaldehyde + succinate + CO2. The enzyme catalyses an N(1)-methyl-2'-deoxyadenosine in single-stranded DNA + 2-oxoglutarate + O2 = a 2'-deoxyadenosine in single-stranded DNA + formaldehyde + succinate + CO2 + H(+). It carries out the reaction an N(3)-methyl-2'-deoxycytidine in single-stranded DNA + 2-oxoglutarate + O2 = a 2'-deoxycytidine in single-stranded DNA + formaldehyde + succinate + CO2 + H(+). It catalyses the reaction a 3,N(4)-etheno-2'-deoxycytidine in single-stranded DNA + 2-oxoglutarate + O2 + H2O = a 2'-deoxycytidine in single-stranded DNA + glyoxal + succinate + CO2. With respect to regulation, activated by ascorbate. Dioxygenase that mediates demethylation of DNA and RNA containing 1-methyladenosine (m1A). Repairs alkylated DNA containing 1-methyladenosine (m1A) and 3-methylcytosine (m3C) by oxidative demethylation. Has a strong preference for single-stranded DNA. Able to process alkylated m3C within double-stranded regions via its interaction with ASCC3, which promotes DNA unwinding to generate single-stranded substrate needed for ALKBH3. Can repair exocyclic 3,N4-ethenocytosine adducs in single-stranded DNA. Also acts on RNA. Demethylates N(1)-methyladenosine (m1A) RNA, an epigenetic internal modification of messenger RNAs (mRNAs) highly enriched within 5'-untranslated regions (UTRs) and in the vicinity of start codons. Requires molecular oxygen, alpha-ketoglutarate and iron. The protein is Alpha-ketoglutarate-dependent dioxygenase alkB homolog 3 of Mus musculus (Mouse).